The primary structure comprises 204 residues: Urease accessory protein UreG (204 aa).

12 to 19 (GPVGSGKT) serves as a coordination point for GTP.

The protein belongs to the SIMIBI class G3E GTPase family. UreG subfamily. Homodimer. UreD, UreF and UreG form a complex that acts as a GTP-hydrolysis-dependent molecular chaperone, activating the urease apoprotein by helping to assemble the nickel containing metallocenter of UreC. The UreE protein probably delivers the nickel.

Its subcellular location is the cytoplasm. In terms of biological role, facilitates the functional incorporation of the urease nickel metallocenter. This process requires GTP hydrolysis, probably effectuated by UreG. The sequence is that of Urease accessory protein UreG from Pseudomonas aeruginosa (strain LESB58).